Reading from the N-terminus, the 339-residue chain is AT-hook motif nuclear-localized protein 26 (339 aa).

Polar residues predominate over residues 1–12; the sequence is MDPVQSHGSQSS. Disordered stretches follow at residues 1 to 132 and 273 to 339; these read MDPV…NKPK and MQTP…RPPY. The span at 24-45 shows a compositional bias: low complexity; that stretch reads LHLQQQQQHQQQHQQQQQQQFF. The segment covering 82-93 has biased composition (polar residues); that stretch reads NMDNIANTNSGS. Gly residues predominate over residues 102-113; the sequence is GGEGGSGGGGSG. Positions 118–130 form a DNA-binding region, a.T hook; the sequence is RRPRGRPAGSKNK. Residues 142 to 279 enclose the PPC domain; the sequence is ANALRTHVME…EDEMQTPVQG (138 aa). The segment covering 278-291 has biased composition (gly residues); it reads QGGGGGGGGGGGMG. A compositionally biased stretch (low complexity) spans 292–310; that stretch reads SPPMMGQQQAMAAMAAAQG.

It is found in the nucleus. Transcription factor that specifically binds AT-rich DNA sequences related to the nuclear matrix attachment regions (MARs). This Arabidopsis thaliana (Mouse-ear cress) protein is AT-hook motif nuclear-localized protein 26.